A 399-amino-acid polypeptide reads, in one-letter code: MAQRAFPNPYADYNKSLAEGYFDSAGRLTPEFSQRLNNKIRELLQQMERGLKSADPRDSTVYTGWAGIAVLYLHLYDVFGDPNYLQMAHGYVKQSLNSLSKHSITFLCGDGGPLAVAAVVHHKMNNEKQAEECITRLIHLNKIDPHAPSEMLYGRMGYISALLFVNKNFGEEKIPQSHIQQICETVLTSGEDLARKRRFTGKTPLMYEWYQEYYVGAAHGLAGIYYYLMQPSLQVSHAKLHNLVKPSVDYVCQLKFPSGNYPPCVDDSRDLLIHWCHGAPGVIYMLTQAYKVFKEERYLNDAYQCADVIWQYGLLKKGYGLCHGTAGNAYAFLSLYSLTQDAKYLYRACKFAEWCLDYGEHGCRTPDTPFSLFEGMAGTIYFLADLLVPTKARFPAFEL.

An N-acetylalanine modification is found at Ala-2. At Lys-142 the chain carries N6-acetyllysine. Cys-276 serves as a coordination point for Zn(2+). Lys-317 serves as a coordination point for glutathione. Residues Cys-322 and His-323 each contribute to the Zn(2+) site. Position 364–367 (364–367) interacts with glutathione; that stretch reads RTPD.

The protein belongs to the LanC-like protein family. As to quaternary structure, interacts with the C-terminal of STOM. Interacts with the EPS8 SH3 domain. Interaction with EPS8 is inhibited by glutathione binding. In terms of tissue distribution, expressed in brain.

It is found in the cytoplasm. The protein resides in the cell membrane. The enzyme catalyses RX + glutathione = an S-substituted glutathione + a halide anion + H(+). The catalysed reaction is 1-chloro-2,4-dinitrobenzene + glutathione = 2,4-dinitrophenyl-S-glutathione + chloride + H(+). Functions as a glutathione transferase. Catalyzes conjugation of the glutathione (GSH) to artificial substrates 1-chloro-2,4-dinitrobenzene (CDNB) and p-nitrophenyl acetate. Mitigates neuronal oxidative stress during normal postnatal development and in response to oxidative stresses probably through GSH antioxidant defense mechanism. May play a role in EPS8 signaling. Binds glutathione. This is Glutathione S-transferase LANCL1 (LANCL1) from Bos taurus (Bovine).